Consider the following 900-residue polypeptide: DNA mismatch repair protein MutS (900 aa).

637–644 (GPNMAGKS) is a binding site for ATP.

It belongs to the DNA mismatch repair MutS family.

Functionally, this protein is involved in the repair of mismatches in DNA. It is possible that it carries out the mismatch recognition step. This protein has a weak ATPase activity. The polypeptide is DNA mismatch repair protein MutS (Methanosarcina acetivorans (strain ATCC 35395 / DSM 2834 / JCM 12185 / C2A)).